Consider the following 161-residue polypeptide: Nucleotide-binding protein Vapar_3769 (161 aa).

This sequence belongs to the YajQ family.

Its function is as follows. Nucleotide-binding protein. This Variovorax paradoxus (strain S110) protein is Nucleotide-binding protein Vapar_3769.